Reading from the N-terminus, the 271-residue chain is 3-methyl-2-oxobutanoate hydroxymethyltransferase (271 aa).

2 residues coordinate Mg(2+): aspartate 53 and aspartate 92. 3-methyl-2-oxobutanoate-binding positions include 53–54 (DS), aspartate 92, and lysine 120. Glutamate 122 contributes to the Mg(2+) binding site. The active-site Proton acceptor is glutamate 189.

Belongs to the PanB family. Homodecamer; pentamer of dimers. It depends on Mg(2+) as a cofactor.

The protein localises to the cytoplasm. It catalyses the reaction 3-methyl-2-oxobutanoate + (6R)-5,10-methylene-5,6,7,8-tetrahydrofolate + H2O = 2-dehydropantoate + (6S)-5,6,7,8-tetrahydrofolate. The protein operates within cofactor biosynthesis; (R)-pantothenate biosynthesis; (R)-pantoate from 3-methyl-2-oxobutanoate: step 1/2. Its function is as follows. Catalyzes the reversible reaction in which hydroxymethyl group from 5,10-methylenetetrahydrofolate is transferred onto alpha-ketoisovalerate to form ketopantoate. The chain is 3-methyl-2-oxobutanoate hydroxymethyltransferase from Burkholderia mallei (strain NCTC 10247).